The primary structure comprises 129 residues: Gas vesicle protein C (129 aa).

Repeats lie at residues 19 to 51, 52 to 84, and 85 to 117; these read VTQLFRETHEFLSATTAHRQEQAKQQAQQLHQF, HQNLEQTTHEFLTETTTQRVAQAEAQANFLHKF, and HQNLEQTTQEFLAETAKNRTEQAKAQSQYLQQF. Residues 19 to 117 form a 3 X 33 AA tandem repeats region; it reads VTQLFRETHE…KAQSQYLQQF (99 aa).

Belongs to the gas vesicle GvpC family.

The protein resides in the gas vesicle. Confers stability, involved in shaping gas vesicles, hollow, gas filled proteinaceous nanostructures. During planktonic growth they allow positioning of the organism at a favorable depth for light or nutrient acquisition. Functionally, cluster expression in E.coli (gvpA1-gvpA2-gvpC-gvpN-gvpJ-gvpK-gvpF-gvpG-gvpV-gvpW) allows cells to float and produces irregularly shaped gas vesicles. The polypeptide is Gas vesicle protein C (Nostoc sp. (strain PCC 7120 / SAG 25.82 / UTEX 2576)).